The chain runs to 416 residues: Probable intermembrane transport protein HI_1671 (416 aa).

8 consecutive transmembrane segments (helical) span residues 62-82 (ILIL…LLGI), 107-127 (IFIC…MLWL), 138-158 (VLLF…LVAL), 172-192 (EINI…LLFI), 263-283 (LIAG…GIYL), 306-326 (FVAF…IFIM), 347-367 (LLHL…VLAL), and 377-397 (IINF…FCTM).

Belongs to the PqiA family.

It is found in the cell inner membrane. In Haemophilus influenzae (strain ATCC 51907 / DSM 11121 / KW20 / Rd), this protein is Probable intermembrane transport protein HI_1671.